A 383-amino-acid polypeptide reads, in one-letter code: Dual-specificity RNA methyltransferase RlmN (383 aa).

Glutamate 95 serves as the catalytic Proton acceptor. One can recognise a Radical SAM core domain in the interval 101–349 (EETRGTLCVS…TTVRKTRGDD (249 aa)). A disulfide bond links cysteine 108 and cysteine 354. Cysteine 115, cysteine 119, and cysteine 122 together coordinate [4Fe-4S] cluster. Residues 180 to 181 (GE), serine 212, 234 to 236 (SLH), and asparagine 311 contribute to the S-adenosyl-L-methionine site. Cysteine 354 (S-methylcysteine intermediate) is an active-site residue.

Belongs to the radical SAM superfamily. RlmN family. The cofactor is [4Fe-4S] cluster.

The protein resides in the cytoplasm. The enzyme catalyses adenosine(2503) in 23S rRNA + 2 reduced [2Fe-2S]-[ferredoxin] + 2 S-adenosyl-L-methionine = 2-methyladenosine(2503) in 23S rRNA + 5'-deoxyadenosine + L-methionine + 2 oxidized [2Fe-2S]-[ferredoxin] + S-adenosyl-L-homocysteine. The catalysed reaction is adenosine(37) in tRNA + 2 reduced [2Fe-2S]-[ferredoxin] + 2 S-adenosyl-L-methionine = 2-methyladenosine(37) in tRNA + 5'-deoxyadenosine + L-methionine + 2 oxidized [2Fe-2S]-[ferredoxin] + S-adenosyl-L-homocysteine. Specifically methylates position 2 of adenine 2503 in 23S rRNA and position 2 of adenine 37 in tRNAs. m2A2503 modification seems to play a crucial role in the proofreading step occurring at the peptidyl transferase center and thus would serve to optimize ribosomal fidelity. The protein is Dual-specificity RNA methyltransferase RlmN of Paraburkholderia xenovorans (strain LB400).